Here is a 474-residue protein sequence, read N- to C-terminus: Adenosylhomocysteinase (474 aa).

Positions 61, 136, and 196 each coordinate substrate. Residue 197-199 (TTT) coordinates NAD(+). Substrate contacts are provided by K226 and D230. NAD(+) contacts are provided by residues N231, 260–265 (GYGDVG), E283, N318, 339–341 (IGH), and N384.

Belongs to the adenosylhomocysteinase family. Requires NAD(+) as cofactor.

It localises to the cytoplasm. The catalysed reaction is S-adenosyl-L-homocysteine + H2O = L-homocysteine + adenosine. Its pathway is amino-acid biosynthesis; L-homocysteine biosynthesis; L-homocysteine from S-adenosyl-L-homocysteine: step 1/1. In terms of biological role, may play a key role in the regulation of the intracellular concentration of adenosylhomocysteine. The polypeptide is Adenosylhomocysteinase (Ralstonia nicotianae (strain ATCC BAA-1114 / GMI1000) (Ralstonia solanacearum)).